The following is a 211-amino-acid chain: MSIADIRTDYAQADLSETDTAADPVTQFAKWFDEALHAEVPEPNAMGVSTVGENGRPSSRIVLIKDFDQRGFTWFTNYDSRKGRELEKNPYAALLFHWIALEREVRIEGRVERVSAEESEQYFQSRPVKSRLSAIASAQSAPIADRAALEAQYAKVEAQHGDSTPRPPHWGGYRLQPEYVEFWQGRRSRLHDRIAYTLQKDGQWTRQRLQP.

Substrate contacts are provided by residues 7–10 (RTDY) and K65. Residues 60 to 65 (RIVLIK), 75 to 76 (FT), R81, and K82 contribute to the FMN site. The substrate site is built by Y122, R126, and S130. Residues 139-140 (QS) and W183 contribute to the FMN site. Position 189–191 (189–191 (RLH)) interacts with substrate. R193 is a binding site for FMN.

Belongs to the pyridoxamine 5'-phosphate oxidase family. Homodimer. FMN serves as cofactor.

The enzyme catalyses pyridoxamine 5'-phosphate + O2 + H2O = pyridoxal 5'-phosphate + H2O2 + NH4(+). It carries out the reaction pyridoxine 5'-phosphate + O2 = pyridoxal 5'-phosphate + H2O2. Its pathway is cofactor metabolism; pyridoxal 5'-phosphate salvage; pyridoxal 5'-phosphate from pyridoxamine 5'-phosphate: step 1/1. It participates in cofactor metabolism; pyridoxal 5'-phosphate salvage; pyridoxal 5'-phosphate from pyridoxine 5'-phosphate: step 1/1. Its function is as follows. Catalyzes the oxidation of either pyridoxine 5'-phosphate (PNP) or pyridoxamine 5'-phosphate (PMP) into pyridoxal 5'-phosphate (PLP). The chain is Pyridoxine/pyridoxamine 5'-phosphate oxidase from Herminiimonas arsenicoxydans.